Here is a 429-residue protein sequence, read N- to C-terminus: Serine hydroxymethyltransferase (429 aa).

Residues leucine 126 and 130–132 (GHL) contribute to the (6S)-5,6,7,8-tetrahydrofolate site. Residue lysine 235 is modified to N6-(pyridoxal phosphate)lysine. Residue 359–361 (SPF) coordinates (6S)-5,6,7,8-tetrahydrofolate.

This sequence belongs to the SHMT family. As to quaternary structure, homodimer. Pyridoxal 5'-phosphate serves as cofactor.

Its subcellular location is the cytoplasm. The catalysed reaction is (6R)-5,10-methylene-5,6,7,8-tetrahydrofolate + glycine + H2O = (6S)-5,6,7,8-tetrahydrofolate + L-serine. It functions in the pathway one-carbon metabolism; tetrahydrofolate interconversion. Its pathway is amino-acid biosynthesis; glycine biosynthesis; glycine from L-serine: step 1/1. Its function is as follows. Catalyzes the reversible interconversion of serine and glycine with tetrahydrofolate (THF) serving as the one-carbon carrier. This reaction serves as the major source of one-carbon groups required for the biosynthesis of purines, thymidylate, methionine, and other important biomolecules. Also exhibits THF-independent aldolase activity toward beta-hydroxyamino acids, producing glycine and aldehydes, via a retro-aldol mechanism. In Synechococcus sp. (strain CC9902), this protein is Serine hydroxymethyltransferase.